The chain runs to 1007 residues: Serine/threonine-protein kinase atg1 (1007 aa).

A Protein kinase domain is found at 30 to 336 (YTRLSEIGRG…FDVYFAHKVL (307 aa)). ATP is bound by residues 36–44 (IGRGSFAVV) and Lys59. Asp174 (proton acceptor) is an active-site residue. Disordered stretches follow at residues 343-489 (LVAD…KEHA), 524-586 (GGQA…PTSA), 795-817 (RLPS…GSGT), and 878-900 (SRPG…DGGQ). Residues 373-387 (MKRENALSGGVRDEP) show a composition bias toward basic and acidic residues. A compositionally biased stretch (polar residues) spans 396–410 (AMTQSPRPETPSTPM). The segment covering 477 to 489 (KPVEKAKDEKEHA) has biased composition (basic and acidic residues). Residues 534–555 (SGAAPGTPPAGGSSPHASPSKA) show a composition bias toward low complexity. Residues 563 to 579 (SRADSAHVRQNSYDRRY) are compositionally biased toward basic and acidic residues. Residues 805–817 (SNLSVGSSLGSGT) show a composition bias toward low complexity. Residues 887 to 896 (DRADARRDNE) are compositionally biased toward basic and acidic residues.

The protein belongs to the protein kinase superfamily. Ser/Thr protein kinase family. APG1/unc-51/ULK1 subfamily. Homodimer. Forms a ternary complex with ATG13 and ATG17.

Its subcellular location is the cytoplasm. It is found in the preautophagosomal structure membrane. It catalyses the reaction L-seryl-[protein] + ATP = O-phospho-L-seryl-[protein] + ADP + H(+). The catalysed reaction is L-threonyl-[protein] + ATP = O-phospho-L-threonyl-[protein] + ADP + H(+). Serine/threonine protein kinase involved in the cytoplasm to vacuole transport (Cvt) and found to be essential in autophagy, where it is required for the formation of autophagosomes. Involved in the clearance of protein aggregates which cannot be efficiently cleared by the proteasome. Required for selective autophagic degradation of the nucleus (nucleophagy) as well as for mitophagy which contributes to regulate mitochondrial quantity and quality by eliminating the mitochondria to a basal level to fulfill cellular energy requirements and preventing excess ROS production. Also involved in endoplasmic reticulum-specific autophagic process, in selective removal of ER-associated degradation (ERAD) substrates. Plays a key role in ATG9 and ATG23 cycling through the pre-autophagosomal structure and is necessary to promote ATG18 binding to ATG9 through phosphorylation of ATG9. Catalyzes phosphorylation of ATG4, decreasing the interaction between ATG4 and ATG8 and impairing deconjugation of PE-conjugated forms of ATG8. The protein is Serine/threonine-protein kinase atg1 of Aspergillus niger (strain ATCC MYA-4892 / CBS 513.88 / FGSC A1513).